We begin with the raw amino-acid sequence, 129 residues long: Glycine cleavage system H protein (129 aa).

The region spanning 24–106 (LLKIGVSEFA…IGDGWLVILK (83 aa)) is the Lipoyl-binding domain. Position 65 is an N6-lipoyllysine (Lys-65).

This sequence belongs to the GcvH family. The glycine cleavage system is composed of four proteins: P, T, L and H. It depends on (R)-lipoate as a cofactor.

Functionally, the glycine cleavage system catalyzes the degradation of glycine. The H protein shuttles the methylamine group of glycine from the P protein to the T protein. The polypeptide is Glycine cleavage system H protein (Prochlorococcus marinus (strain MIT 9301)).